The following is a 391-amino-acid chain: Odorant receptor 67d (391 aa).

Residues 1 to 45 (MLKMAKVEPVERYCKVIRMIRFCVGFCGNDVADPNFRMWWLTYAV) are Cytoplasmic-facing. The helical transmembrane segment at 46–66 (MAAIAFFFACTGYTIYVGVVI) threads the bilayer. Over 67 to 71 (NGDLT) the chain is Extracellular. A helical membrane pass occupies residues 72–92 (IILQALAMVGSAVQGLTKLLV). The Cytoplasmic segment spans residues 93–140 (TANNASHMREVQNTYEDIYREYGSKGDEYAKCLEKRIRITWTLLIGFM). A helical transmembrane segment spans residues 141 to 161 (LVYIILLGLVITFPIFYLLIL). At 162 to 164 (HQK) the chain is on the extracellular side. The helical transmembrane segment at 165-185 (VLVMQFLIPFLDHTTDGGHLI) threads the bilayer. The Cytoplasmic portion of the chain corresponds to 186-191 (LTAAHV). The chain crosses the membrane as a helical span at residues 192–212 (ILITFGGFGNYGGDMYLFLFV). At 213-268 (THVPLIKDIFCVKLTEFNELVMKRNDFPKVRAMLCDLLVWHQLYTRMLQTTKKIYS) the chain is on the extracellular side. A helical transmembrane segment spans residues 269-289 (IVLFVQLSTTCVGLLCTISCI). The Cytoplasmic segment spans residues 290 to 297 (FMKAWPAA). The chain crosses the membrane as a helical span at residues 298–318 (PLYLLYAAITLYTFCGLGTLV). The Extracellular segment spans residues 319 to 391 (ENSNEDFLSV…FSMMLMNYLG (73 aa)).

The protein belongs to the insect chemoreceptor superfamily. Heteromeric odorant receptor channel (TC 1.A.69) family. Or67d subfamily. In terms of assembly, interacts with Orco. Complexes exist early in the endomembrane system in olfactory sensory neurons (OSNs), coupling these complexes to the conserved ciliary trafficking pathway. As to expression, expressed in antenna.

It localises to the cell membrane. Functionally, plays a role in detection and sensitivity to pheromones and signal transduction of the fatty-acid-derived male pheromone 11-cis vaccenyl acetate (cVA). Acts in concert with Snmp and lush to capture cVA molecules on the surface of Or67d expressing olfactory dendrites and facilitate their transfer to the odorant-receptor Orco complex. Necessary to mediate behavioral responses to cVA by regulating both male and female mating behavior. Activation of Or67d neurons by cVA inhibits courtship of other males, whereas in females their activation promotes receptivity to other males. May form a complex with Orco to form odorant-sensing units, providing sensitive and prolonged odorant signaling and calcium permeability. This Drosophila melanogaster (Fruit fly) protein is Odorant receptor 67d (Or67d).